The chain runs to 272 residues: Catabolic 3-dehydroquinate dehydratase (272 aa).

3-dehydroquinate-binding positions include 66 to 68 and Arg-102; that span reads EFR. His-163 (proton donor/acceptor) is an active-site residue. Lys-190 acts as the Schiff-base intermediate with substrate in catalysis. 3-dehydroquinate contacts are provided by Arg-232, Ser-251, and Gln-255.

It belongs to the type-I 3-dehydroquinase family.

The enzyme catalyses 3-dehydroquinate = 3-dehydroshikimate + H2O. Its pathway is aromatic compound metabolism; 3,4-dihydroxybenzoate biosynthesis; 3,4-dihydroxybenzoate from 3-dehydroquinate: step 1/2. In terms of biological role, involved in the biosynthesis of protocatechuate. Catalyzes the catabolic dehydration of 3-dehydroquinate (DHQ) to yield 3-dehydroshikimate. This is Catabolic 3-dehydroquinate dehydratase from Acinetobacter baylyi (strain ATCC 33305 / BD413 / ADP1).